Consider the following 150-residue polypeptide: D-aminoacyl-tRNA deacylase (150 aa).

The Gly-cisPro motif, important for rejection of L-amino acids motif lies at 138–139 (GP).

It belongs to the DTD family. Homodimer.

The protein resides in the cytoplasm. It catalyses the reaction glycyl-tRNA(Ala) + H2O = tRNA(Ala) + glycine + H(+). The enzyme catalyses a D-aminoacyl-tRNA + H2O = a tRNA + a D-alpha-amino acid + H(+). Its function is as follows. An aminoacyl-tRNA editing enzyme that deacylates mischarged D-aminoacyl-tRNAs. Also deacylates mischarged glycyl-tRNA(Ala), protecting cells against glycine mischarging by AlaRS. Acts via tRNA-based rather than protein-based catalysis; rejects L-amino acids rather than detecting D-amino acids in the active site. By recycling D-aminoacyl-tRNA to D-amino acids and free tRNA molecules, this enzyme counteracts the toxicity associated with the formation of D-aminoacyl-tRNA entities in vivo and helps enforce protein L-homochirality. The polypeptide is D-aminoacyl-tRNA deacylase (Bacteroides thetaiotaomicron (strain ATCC 29148 / DSM 2079 / JCM 5827 / CCUG 10774 / NCTC 10582 / VPI-5482 / E50)).